A 251-amino-acid chain; its full sequence is Pyrroloquinoline-quinone synthase (251 aa).

This sequence belongs to the PqqC family.

The catalysed reaction is 6-(2-amino-2-carboxyethyl)-7,8-dioxo-1,2,3,4,7,8-hexahydroquinoline-2,4-dicarboxylate + 3 O2 = pyrroloquinoline quinone + 2 H2O2 + 2 H2O + H(+). Its pathway is cofactor biosynthesis; pyrroloquinoline quinone biosynthesis. Its function is as follows. Ring cyclization and eight-electron oxidation of 3a-(2-amino-2-carboxyethyl)-4,5-dioxo-4,5,6,7,8,9-hexahydroquinoline-7,9-dicarboxylic-acid to PQQ. The polypeptide is Pyrroloquinoline-quinone synthase (Klebsiella pneumoniae subsp. pneumoniae (strain ATCC 700721 / MGH 78578)).